A 249-amino-acid polypeptide reads, in one-letter code: Phosphate import ATP-binding protein PstB (249 aa).

Residues I4 to I244 enclose the ABC transporter domain. G36–S43 lines the ATP pocket.

Belongs to the ABC transporter superfamily. Phosphate importer (TC 3.A.1.7) family. In terms of assembly, the complex is composed of two ATP-binding proteins (PstB), two transmembrane proteins (PstC and PstA) and a solute-binding protein (PstS).

The protein localises to the cell membrane. The enzyme catalyses phosphate(out) + ATP + H2O = ADP + 2 phosphate(in) + H(+). In terms of biological role, part of the ABC transporter complex PstSACB involved in phosphate import. Responsible for energy coupling to the transport system. This chain is Phosphate import ATP-binding protein PstB, found in Clostridium acetobutylicum (strain ATCC 824 / DSM 792 / JCM 1419 / IAM 19013 / LMG 5710 / NBRC 13948 / NRRL B-527 / VKM B-1787 / 2291 / W).